A 497-amino-acid polypeptide reads, in one-letter code: 3-octaprenyl-4-hydroxybenzoate carboxy-lyase (497 aa).

A Mn(2+)-binding site is contributed by Asn172. Residues 175 to 177 (IYR), 189 to 191 (RWL), and 194 to 195 (RG) each bind prenylated FMN. Glu238 contributes to the Mn(2+) binding site. Asp287 (proton donor) is an active-site residue.

Belongs to the UbiD family. As to quaternary structure, homohexamer. The cofactor is prenylated FMN. Mn(2+) serves as cofactor.

It is found in the cell membrane. The catalysed reaction is a 4-hydroxy-3-(all-trans-polyprenyl)benzoate + H(+) = a 2-(all-trans-polyprenyl)phenol + CO2. Its pathway is cofactor biosynthesis; ubiquinone biosynthesis. Functionally, catalyzes the decarboxylation of 3-octaprenyl-4-hydroxy benzoate to 2-octaprenylphenol, an intermediate step in ubiquinone biosynthesis. In Enterobacter sp. (strain 638), this protein is 3-octaprenyl-4-hydroxybenzoate carboxy-lyase.